A 557-amino-acid chain; its full sequence is Putative inactive polypeptide N-acetylgalactosaminyltransferase 11 (557 aa).

Topologically, residues 1 to 4 (MKSL) are cytoplasmic. A helical; Signal-anchor for type II membrane protein membrane pass occupies residues 5–27 (LFGTPCSCAIFILVYCIITLFIW). Topologically, residues 28 to 557 (FLYTDNLSNA…MRDICLSVNH (530 aa)) are lumenal. N33 and N103 each carry an N-linked (GlcNAc...) asparagine glycan. 5 cysteine pairs are disulfide-bonded: C99–C325, C316–C397, C437–C450, C472–C486, and C511–C526. Residues 109–215 (TVTVSIVIAI…RGWLPPLLEP (107 aa)) are catalytic subdomain A. An N-linked (GlcNAc...) asparagine glycan is attached at N220. The interval 271-333 (PYPSSQLEGR…PCSRVGIIYK (63 aa)) is catalytic subdomain B. N-linked (GlcNAc...) asparagine glycosylation occurs at N379. Positions 456 to 557 (EDWTLTSRCQ…MRDICLSVNH (102 aa)) constitute a Ricin B-type lectin domain.

Belongs to the glycosyltransferase 2 family. GalNAc-T subfamily.

Its subcellular location is the golgi apparatus membrane. Its function is as follows. Probable inactive glycosyltransferase. The chain is Putative inactive polypeptide N-acetylgalactosaminyltransferase 11 from Drosophila melanogaster (Fruit fly).